A 274-amino-acid polypeptide reads, in one-letter code: Large ribosomal subunit protein uL2 (274 aa).

2 disordered regions span residues 36–61 (QKSKTGGRNSNGRITTRHRGGGHKQR) and 223–274 (VAMN…RRKR). Residues 37–46 (KSKTGGRNSN) show a composition bias toward polar residues. 2 stretches are compositionally biased toward basic residues: residues 50 to 61 (TTRHRGGGHKQR) and 254 to 274 (KGHKTRKNKRTDKYIVRRRKR).

The protein belongs to the universal ribosomal protein uL2 family. Part of the 50S ribosomal subunit. Forms a bridge to the 30S subunit in the 70S ribosome.

Functionally, one of the primary rRNA binding proteins. Required for association of the 30S and 50S subunits to form the 70S ribosome, for tRNA binding and peptide bond formation. It has been suggested to have peptidyltransferase activity; this is somewhat controversial. Makes several contacts with the 16S rRNA in the 70S ribosome. In Halorhodospira halophila (strain DSM 244 / SL1) (Ectothiorhodospira halophila (strain DSM 244 / SL1)), this protein is Large ribosomal subunit protein uL2.